The primary structure comprises 382 residues: Pyrimidine monooxygenase RutA (382 aa).

FMN contacts are provided by residues 68 to 69 (IK), N134, E143, 159 to 160 (RY), and S209.

Belongs to the NtaA/SnaA/DszA monooxygenase family. RutA subfamily.

It carries out the reaction uracil + FMNH2 + NADH + O2 = (Z)-3-ureidoacrylate + FMN + NAD(+) + H2O + H(+). It catalyses the reaction thymine + FMNH2 + NADH + O2 = (Z)-2-methylureidoacrylate + FMN + NAD(+) + H2O + H(+). Catalyzes the pyrimidine ring opening between N-3 and C-4 by an unusual flavin hydroperoxide-catalyzed mechanism, adding oxygen atoms in the process to yield ureidoacrylate peracid, that immediately reacts with FMN forming ureidoacrylate and FMN-N(5)-oxide. The FMN-N(5)-oxide reacts spontaneously with NADH to produce FMN. Requires the flavin reductase RutF to regenerate FMN in vivo. This chain is Pyrimidine monooxygenase RutA, found in Escherichia coli O150:H5 (strain SE15).